The chain runs to 434 residues: [Pyruvate dehydrogenase (acetyl-transferring)] kinase isozyme 1, mitochondrial (434 aa).

Residues 1 to 26 (MRLARLLRGGTSVRPLCAVPCASRSL) constitute a mitochondrion transit peptide. Phosphotyrosine; by FGFR1 is present on Tyr-136. The Histidine kinase domain occupies 161-391 (TEYKESFGVD…DAVIYIKALS (231 aa)). Position 241 is a phosphotyrosine; by FGFR1, ABL1, FLT3 and JAK2 (Tyr-241). Tyr-242 carries the post-translational modification Phosphotyrosine; by FGFR1. Residues 277–284 (ELFKNAMR), Asp-316, 335–336 (ST), and 352–357 (GFGYGL) contribute to the ATP site. The residue at position 336 (Thr-336) is a Phosphothreonine. Lys-403 is modified (N6-succinyllysine).

The protein belongs to the PDK/BCKDK protein kinase family. As to quaternary structure, homodimer, and heterodimer with PDK2. Interacts with the pyruvate dehydrogenase complex subunit DLAT, and is part of the multimeric pyruvate dehydrogenase complex that contains multiple copies of pyruvate dehydrogenase (E1), dihydrolipoamide acetyltransferase (DLAT, E2) and lipoamide dehydrogenase (DLD, E3). Interacts with phosphoglycerate kinase PGK1; the interaction is direct, occurs under hypoxic conditions and leads to PDK1-mediated inhibition of pyruvate dehydrogenase complex activity. Phosphorylated by constitutively activated ABL1, FGFR1, FLT3 and JAK2 (in vitro), and this may also occur in cancer cells that express constitutively activated ABL1, FGFR1, FLT3 and JAK2. Phosphorylation at Tyr-241 and Tyr-242 strongly increases kinase activity, while phosphorylation at Tyr-136 has a lesser effect. Phosphorylated under hypoxic conditions at Thr-336 by phosphoglycerate kinase PGK1 which has an activating effect.

Its subcellular location is the mitochondrion matrix. It carries out the reaction L-seryl-[pyruvate dehydrogenase E1 alpha subunit] + ATP = O-phospho-L-seryl-[pyruvate dehydrogenase E1 alpha subunit] + ADP + H(+). In terms of biological role, kinase that plays a key role in regulation of glucose and fatty acid metabolism and homeostasis via phosphorylation of the pyruvate dehydrogenase subunits PDHA1 and PDHA2. This inhibits pyruvate dehydrogenase activity, and thereby regulates metabolite flux through the tricarboxylic acid cycle, down-regulates aerobic respiration and inhibits the formation of acetyl-coenzyme A from pyruvate. Plays an important role in cellular responses to hypoxia and is important for cell proliferation under hypoxia. This is [Pyruvate dehydrogenase (acetyl-transferring)] kinase isozyme 1, mitochondrial (Pdk1) from Mus musculus (Mouse).